Reading from the N-terminus, the 229-residue chain is Non-structural protein P8 (229 aa).

2 helical membrane passes run Ile119 to Leu139 and Ser162 to Ala182.

Belongs to the orbivirus NS3 family. As to quaternary structure, forms homooligomers via coiled-coil motif. Interacts with host OPTN; this interaction inhibits innate immune response.

Its subcellular location is the host cell membrane. The protein resides in the host Golgi apparatus. In terms of biological role, plays a role in the inhibition of host innate immune response. Interacts with host OPTN and thus inhibits the recruitment of TBK1 to the host Golgi apparatus. In turn, downstream partner IRF3 cannot be activated and IFN-beta production is impaired. Functionally, facilitates viral particle release either by increasing plasma membrane permeability through a viroporin-like activity or by viral budding. This chain is Non-structural protein P8 (Segment-10), found in Bluetongue virus 17 (isolate USA) (BTV 17).